The following is a 122-amino-acid chain: Large ribosomal subunit protein uL14 (122 aa).

It belongs to the universal ribosomal protein uL14 family. As to quaternary structure, part of the 50S ribosomal subunit. Forms a cluster with proteins L3 and L19. In the 70S ribosome, L14 and L19 interact and together make contacts with the 16S rRNA in bridges B5 and B8.

Functionally, binds to 23S rRNA. Forms part of two intersubunit bridges in the 70S ribosome. This is Large ribosomal subunit protein uL14 from Phenylobacterium zucineum (strain HLK1).